We begin with the raw amino-acid sequence, 266 residues long: MRLIPLRNTAEVGKWAARHIVNRINAFKPTAERPFILGLPTGGTPMEAYKYLIAMHKAGEVSFKHVVTFNMDEYVGLPKEHPESYYTFMHTNFFDHVDIPAENINLLNGNAADIDAECRRYEEKIKSYGKIHLFMGGVGVDGHIAFNEPASSLASRTRIKTLTQETRIANSRFFGGDANLVPKYALTVGVGTLLDAEEVMILVTGHGKAQALQAAVEGSINHMWTISCLQLHAKAIMVCDEPSTMELKVKTVKYFRELEAENVKDL.

The active-site Proton acceptor; for enolization step is the aspartate 72. Aspartate 141 acts as the For ring-opening step in catalysis. Histidine 143 functions as the Proton acceptor; for ring-opening step in the catalytic mechanism. Glutamate 148 functions as the For ring-opening step in the catalytic mechanism.

It belongs to the glucosamine/galactosamine-6-phosphate isomerase family. NagB subfamily. As to quaternary structure, homohexamer.

It catalyses the reaction alpha-D-glucosamine 6-phosphate + H2O = beta-D-fructose 6-phosphate + NH4(+). It functions in the pathway amino-sugar metabolism; N-acetylneuraminate degradation; D-fructose 6-phosphate from N-acetylneuraminate: step 5/5. Its activity is regulated as follows. Allosterically activated by N-acetylglucosamine 6-phosphate (GlcNAc6P). Catalyzes the reversible isomerization-deamination of glucosamine 6-phosphate (GlcN6P) to form fructose 6-phosphate (Fru6P) and ammonium ion. This chain is Glucosamine-6-phosphate deaminase, found in Yersinia pestis bv. Antiqua (strain Antiqua).